Consider the following 100-residue polypeptide: Large ribosomal subunit protein bL28 (100 aa).

This sequence belongs to the bacterial ribosomal protein bL28 family.

This chain is Large ribosomal subunit protein bL28, found in Methylobacterium radiotolerans (strain ATCC 27329 / DSM 1819 / JCM 2831 / NBRC 15690 / NCIMB 10815 / 0-1).